Consider the following 314-residue polypeptide: uncharacterized protein (314 aa).

The HTH araC/xylS-type domain maps to 192–289; sequence TEVKLHIKDN…GSSPGLFRSL (98 aa). 2 consecutive DNA-binding regions (H-T-H motif) follow at residues 209-230 and 257-279; these read TDVA…AAEL and IKEI…SAKI.

This is an uncharacterized protein from Bacillus subtilis (strain 168).